Consider the following 215-residue polypeptide: Adenylate kinase (215 aa).

An ATP-binding site is contributed by 10–15 (GAGKGT). The tract at residues 30 to 59 (STGDMLRAAVKAGTELGLKAKSVMDAGNLV) is NMP. AMP is bound by residues T31, R36, 57 to 59 (NLV), 85 to 88 (GFPR), and Q92. The tract at residues 122-159 (GRRVHEGSGRIYHTIFNPPKVEGVDDVTGESLVQRKDD) is LID. Residues R123 and 132–133 (IY) each bind ATP. The AMP site is built by R156 and R167. G201 provides a ligand contact to ATP.

The protein belongs to the adenylate kinase family. As to quaternary structure, monomer.

The protein resides in the cytoplasm. It carries out the reaction AMP + ATP = 2 ADP. It participates in purine metabolism; AMP biosynthesis via salvage pathway; AMP from ADP: step 1/1. In terms of biological role, catalyzes the reversible transfer of the terminal phosphate group between ATP and AMP. Plays an important role in cellular energy homeostasis and in adenine nucleotide metabolism. This is Adenylate kinase from Pseudomonas syringae pv. tomato (strain ATCC BAA-871 / DC3000).